The primary structure comprises 314 residues: GTPase-interacting component 1 (314 aa).

Disordered regions lie at residues 112 to 156 (SRRH…KHDV), 199 to 221 (TMDS…QLDS), and 241 to 261 (LGDS…SFSG). The CRIB domain occupies 126 to 139 (ISTPFDFHHISHAN). Positions 140-156 (GKREDNPLESHEEKHDV) are enriched in basic and acidic residues. Residues 208–221 (ETNNTPNGNKQLDS) show a composition bias toward polar residues. A compositionally biased stretch (low complexity) spans 251–260 (PSSPSVSSFS).

Belongs to the BORG/CEP family. Interacts with GTP-bound CDC42.

Its subcellular location is the bud neck. It localises to the bud tip. The protein localises to the cytoplasm. The protein resides in the cell cortex. It is found in the cytoskeleton. Functionally, required for cell size and shape control, bud site selection, bud emergence, actin cytoskeletal organization, mitotic spindle orientation/positioning, and mating projection formation in response to mating pheromone. The protein is GTPase-interacting component 1 (GIC1) of Saccharomyces cerevisiae (strain ATCC 204508 / S288c) (Baker's yeast).